The chain runs to 477 residues: Methylenetetrahydrofolate--tRNA-(uracil-5-)-methyltransferase TrmFO (477 aa).

15 to 20 is an FAD binding site; the sequence is GAGLAG.

The protein belongs to the MnmG family. TrmFO subfamily. It depends on FAD as a cofactor.

It localises to the cytoplasm. It carries out the reaction uridine(54) in tRNA + (6R)-5,10-methylene-5,6,7,8-tetrahydrofolate + NADH + H(+) = 5-methyluridine(54) in tRNA + (6S)-5,6,7,8-tetrahydrofolate + NAD(+). The catalysed reaction is uridine(54) in tRNA + (6R)-5,10-methylene-5,6,7,8-tetrahydrofolate + NADPH + H(+) = 5-methyluridine(54) in tRNA + (6S)-5,6,7,8-tetrahydrofolate + NADP(+). Catalyzes the folate-dependent formation of 5-methyl-uridine at position 54 (M-5-U54) in all tRNAs. The chain is Methylenetetrahydrofolate--tRNA-(uracil-5-)-methyltransferase TrmFO from Nitrobacter hamburgensis (strain DSM 10229 / NCIMB 13809 / X14).